A 456-amino-acid chain; its full sequence is NADPH-ferredoxin reductase FprA (456 aa).

Residues S14, E40, L48, and V84 each contribute to the FAD site. NADP(+)-binding positions include R110, 155-158 (NGNV), 199-200 (RR), and E211. Residues W359 and 366–368 (GVI) each bind FAD. G366 contacts NADP(+).

It belongs to the ferredoxin--NADP reductase type 1 family. Monomer. The cofactor is FAD.

The catalysed reaction is 2 reduced [2Fe-2S]-[ferredoxin] + NADP(+) + H(+) = 2 oxidized [2Fe-2S]-[ferredoxin] + NADPH. In terms of biological role, may serve as electron transfer protein and supply electrons to P450 systems. In Mycobacterium tuberculosis (strain CDC 1551 / Oshkosh), this protein is NADPH-ferredoxin reductase FprA (fprA).